A 156-amino-acid chain; its full sequence is Large ribosomal subunit protein eL24 (156 aa).

The segment covering 110–129 (KESKAKKQETQAAKKAEKAK) has biased composition (basic and acidic residues). The segment at 110-156 (KESKAKKQETQAAKKAEKAKNAANPKARVTSKQGAKGAPVKVAAKSR) is disordered. Positions 130-156 (NAANPKARVTSKQGAKGAPVKVAAKSR) are enriched in low complexity.

This sequence belongs to the eukaryotic ribosomal protein eL24 family. As to quaternary structure, component of the large ribosomal subunit (LSU). Mature N.crassa ribosomes consist of a small (40S) and a large (60S) subunit. The 40S small subunit contains 1 molecule of ribosomal RNA (18S rRNA) and at least 32 different proteins. The large 60S subunit contains 3 rRNA molecules (26S, 5.8S and 5S rRNA) and at least 42 different proteins.

Its subcellular location is the cytoplasm. In terms of biological role, component of the ribosome, a large ribonucleoprotein complex responsible for the synthesis of proteins in the cell. The small ribosomal subunit (SSU) binds messenger RNAs (mRNAs) and translates the encoded message by selecting cognate aminoacyl-transfer RNA (tRNA) molecules. The large subunit (LSU) contains the ribosomal catalytic site termed the peptidyl transferase center (PTC), which catalyzes the formation of peptide bonds, thereby polymerizing the amino acids delivered by tRNAs into a polypeptide chain. The nascent polypeptides leave the ribosome through a tunnel in the LSU and interact with protein factors that function in enzymatic processing, targeting, and the membrane insertion of nascent chains at the exit of the ribosomal tunnel. In Neurospora crassa (strain ATCC 24698 / 74-OR23-1A / CBS 708.71 / DSM 1257 / FGSC 987), this protein is Large ribosomal subunit protein eL24 (rpl-24).